The primary structure comprises 120 residues: NAD(P)H-quinone oxidoreductase subunit 3, chloroplastic (120 aa).

The next 3 membrane-spanning stretches (helical) occupy residues I9 to G29, M64 to M84, and V88 to S108.

Belongs to the complex I subunit 3 family. In terms of assembly, NDH is composed of at least 16 different subunits, 5 of which are encoded in the nucleus.

The protein localises to the plastid. Its subcellular location is the chloroplast thylakoid membrane. The enzyme catalyses a plastoquinone + NADH + (n+1) H(+)(in) = a plastoquinol + NAD(+) + n H(+)(out). The catalysed reaction is a plastoquinone + NADPH + (n+1) H(+)(in) = a plastoquinol + NADP(+) + n H(+)(out). NDH shuttles electrons from NAD(P)H:plastoquinone, via FMN and iron-sulfur (Fe-S) centers, to quinones in the photosynthetic chain and possibly in a chloroplast respiratory chain. The immediate electron acceptor for the enzyme in this species is believed to be plastoquinone. Couples the redox reaction to proton translocation, and thus conserves the redox energy in a proton gradient. This chain is NAD(P)H-quinone oxidoreductase subunit 3, chloroplastic, found in Calycanthus floridus var. glaucus (Eastern sweetshrub).